The primary structure comprises 230 residues: 2,3-bisphosphoglycerate-dependent phosphoglycerate mutase 2 (230 aa).

Substrate contacts are provided by residues 8–15 (RHGQSEWN), 21–22 (TG), R60, 87–90 (ERHY), K98, 114–115 (RR), and 183–184 (GN). The Tele-phosphohistidine intermediate role is filled by H9. The active-site Proton donor/acceptor is the E87.

Belongs to the phosphoglycerate mutase family. BPG-dependent PGAM subfamily.

It catalyses the reaction (2R)-2-phosphoglycerate = (2R)-3-phosphoglycerate. Its pathway is carbohydrate degradation; glycolysis; pyruvate from D-glyceraldehyde 3-phosphate: step 3/5. Its function is as follows. Catalyzes the interconversion of 2-phosphoglycerate and 3-phosphoglycerate. This is 2,3-bisphosphoglycerate-dependent phosphoglycerate mutase 2 from Lactiplantibacillus plantarum (strain ATCC BAA-793 / NCIMB 8826 / WCFS1) (Lactobacillus plantarum).